We begin with the raw amino-acid sequence, 199 residues long: uncharacterized protein (199 aa).

Transmembrane regions (helical) follow at residues 1 to 21 (MEQF…TFIF), 28 to 48 (IAVS…IALY), 51 to 71 (LNAA…YLGM), 83 to 103 (LVAA…WFII), 127 to 147 (QLVL…FVIQ), and 154 to 174 (AVGG…LFGI).

Its subcellular location is the cell membrane. This is an uncharacterized protein from Bacillus subtilis (strain 168).